Here is a 1391-residue protein sequence, read N- to C-terminus: ESX-5 secretion system protein EccC5 (1391 aa).

2 consecutive transmembrane segments (helical) span residues 38 to 58 (WLIV…AMVF) and 65 to 85 (FGGI…MMMF). 3 FtsK domains span residues 476 to 678 (GELL…GAAQ), 858 to 1052 (QPPW…EDAK), and 1161 to 1354 (LAPV…DPDE). ATP is bound by residues 499–506 (GTTGSGKS), 876–883 (GAGGSGKT), and 1178–1185 (GRRECGRT).

In terms of assembly, part of the ESX-5 / type VII secretion system (T7SS), which is composed of cytosolic and membrane components. The ESX-5 membrane complex is composed of EccB5, EccC5, EccD5 and EccE5.

It localises to the cell inner membrane. Its function is as follows. Part of the ESX-5 specialized secretion system, which is responsible for the secretion of EsxN and a number of PE_PGRS and PPE proteins, including PPE41. This Mycobacterium tuberculosis (strain CDC 1551 / Oshkosh) protein is ESX-5 secretion system protein EccC5.